Reading from the N-terminus, the 252-residue chain is Putative phosphonates utilization ATP-binding protein PhnK (252 aa).

The 241-residue stretch at 6–246 (LSVNNLTHLY…PHHPYTQLLV (241 aa)) folds into the ABC transporter domain. Position 38-45 (38-45 (GESGSGKT)) interacts with ATP.

Belongs to the ABC transporter superfamily. As to quaternary structure, forms a complex with PhnG, PhnH, PhnI and PhnJ with the suggested composition PhnG(4)H(2)I(2)J(2)K.

Functionally, belongs to an operon involved in alkylphosphonate uptake and C-P lyase. Exact function not known. PhnK is not required for the ribophosphonate triphosphate (RPnTP) synthase reaction. This Escherichia coli (strain K12) protein is Putative phosphonates utilization ATP-binding protein PhnK (phnK).